A 226-amino-acid polypeptide reads, in one-letter code: 7-cyano-7-deazaguanine synthase (226 aa).

ATP is bound at residue 9-19 (LSGGLDSTVAT). Zn(2+) is bound by residues Cys-192, Cys-200, Cys-203, and Cys-206.

This sequence belongs to the QueC family. Requires Zn(2+) as cofactor.

It carries out the reaction 7-carboxy-7-deazaguanine + NH4(+) + ATP = 7-cyano-7-deazaguanine + ADP + phosphate + H2O + H(+). The protein operates within purine metabolism; 7-cyano-7-deazaguanine biosynthesis. Its function is as follows. Catalyzes the ATP-dependent conversion of 7-carboxy-7-deazaguanine (CDG) to 7-cyano-7-deazaguanine (preQ(0)). This chain is 7-cyano-7-deazaguanine synthase, found in Methanosphaera stadtmanae (strain ATCC 43021 / DSM 3091 / JCM 11832 / MCB-3).